A 214-amino-acid polypeptide reads, in one-letter code: Adenylate kinase (214 aa).

10 to 15 (GAGKGT) contributes to the ATP binding site. The segment at 30-59 (STGDMFRDHKARGTELGKTVQAIMDAGGLV) is NMP. Residues threonine 31, arginine 36, 57–59 (GLV), 85–88 (GYPR), and glutamine 92 each bind AMP. The tract at residues 126 to 163 (GRRSCPKCGAVYHVSANPPRRMGYCDRDDAGLVQRDDD) is LID. Arginine 127 contacts ATP. 2 residues coordinate Zn(2+): cysteine 130 and cysteine 133. 136 to 137 (VY) contacts ATP. Zn(2+) is bound by residues cysteine 150 and aspartate 153. The AMP site is built by arginine 160 and arginine 171. Glycine 199 contacts ATP.

It belongs to the adenylate kinase family. Monomer.

Its subcellular location is the cytoplasm. The catalysed reaction is AMP + ATP = 2 ADP. Its pathway is purine metabolism; AMP biosynthesis via salvage pathway; AMP from ADP: step 1/1. Its function is as follows. Catalyzes the reversible transfer of the terminal phosphate group between ATP and AMP. Plays an important role in cellular energy homeostasis and in adenine nucleotide metabolism. The sequence is that of Adenylate kinase from Anaeromyxobacter sp. (strain Fw109-5).